The sequence spans 360 residues: Protein Wnt-2 (360 aa).

The signal sequence occupies residues Met-1 to Ser-25. 11 cysteine pairs are disulfide-bonded: Cys-76–Cys-87, Cys-127–Cys-135, Cys-137–Cys-157, Cys-206–Cys-220, Cys-208–Cys-215, Cys-278–Cys-309, Cys-294–Cys-304, Cys-308–Cys-348, Cys-324–Cys-339, Cys-326–Cys-336, and Cys-331–Cys-332. A lipid anchor (O-palmitoleoyl serine; by PORCN) is attached at Ser-212. The N-linked (GlcNAc...) asparagine glycan is linked to Asn-295.

This sequence belongs to the Wnt family. Post-translationally, palmitoleoylation is required for efficient binding to frizzled receptors. Depalmitoleoylation leads to Wnt signaling pathway inhibition.

Its subcellular location is the secreted. It localises to the extracellular space. The protein localises to the extracellular matrix. In terms of biological role, ligand for members of the frizzled family of seven transmembrane receptors. Functions in the canonical Wnt signaling pathway that results in activation of transcription factors of the TCF/LEF family. Functions as a upstream regulator of FGF10 expression. Plays an important role in embryonic lung development. May contribute to embryonic brain development by regulating the proliferation of dopaminergic precursors and neurons. The sequence is that of Protein Wnt-2 (WNT2) from Gorilla gorilla gorilla (Western lowland gorilla).